The primary structure comprises 7639 residues: Nonribosomal peptide synthetase 4 (7639 aa).

An adenylation 1 region spans residues 244–636 (WQGAMRPDAE…AGRKDAQIKF (393 aa)). One can recognise a Carrier 1 domain in the interval 776-852 (TFSNGTESQL…ALARHVKEIE (77 aa)). Serine 813 carries the post-translational modification O-(pantetheine 4'-phosphoryl)serine. An epimerization 1 region spans residues 865-1295 (FELSPIQRLY…EQNLSLLVES (431 aa)). Residues 1337 to 1767 (VEDIYPCSPM…HLGPRHHQQI (431 aa)) are condensation 1. The adenylation 2 stretch occupies residues 1786–2181 (FEEQAILRPE…FGRKDTQVKL (396 aa)). A Carrier 2 domain is found at 2313–2389 (APASDMEKQL…DMAQSALPLS (77 aa)). Serine 2350 is subject to O-(pantetheine 4'-phosphoryl)serine. The tract at residues 2426–2852 (VEDIYPCTPL…LISTRDYQSL (427 aa)) is condensation 2. Residues 2878 to 3269 (QPLDKLAVCA…QGRKDNQVKI (392 aa)) form an adenylation 3 region. Positions 3403–3479 (REATETETKL…KLASFVQAVE (77 aa)) constitute a Carrier 3 domain. Residue serine 3440 is modified to O-(pantetheine 4'-phosphoryl)serine. Positions 3491–3928 (AFPLSPIQKL…RMTQAKAEPQ (438 aa)) are epimerization 2. Positions 3961–4389 (EAVYPCSPVQ…VSDDCAQQLT (429 aa)) are condensation 3. Positions 4407-4810 (FERNVQSLPH…VSRKDTQIKL (404 aa)) are adenylation 4. In terms of domain architecture, Carrier 4 spans 4944–5020 (APTTMMQRKL…EMATCCGHSE (77 aa)). Serine 4981 carries the post-translational modification O-(pantetheine 4'-phosphoryl)serine. Residues 5058-5478 (QDLYPCSSLQ…QFCSEEDLQM (421 aa)) are condensation 4. An adenylation 5 region spans residues 5498–5900 (FWQSVATYHD…IGRKDNQVKL (403 aa)). The region spanning 6039-6115 (TDTTFVGQLL…DLVTLIEKEG (77 aa)) is the Carrier 5 domain. Serine 6076 bears the O-(pantetheine 4'-phosphoryl)serine mark. Residues 6133-6567 (FALSPIQQLF…EVLGNMAMEL (435 aa)) are epimerization 3. The interval 6607 to 7032 (VEDMYPCSPM…EALSHLRVSQ (426 aa)) is condensation 5. The Carrier 6 domain maps to 7088-7164 (RDKDQVYNKL…TLLNCLRDKS (77 aa)). At serine 7125 the chain carries O-(pantetheine 4'-phosphoryl)serine. The interval 7254-7603 (LDGEGPLDVA…SNTEVCFLYR (350 aa)) is condensation 6.

It belongs to the NRP synthetase family.

The enzyme catalyses D-allo-threonine + D-leucine + D-alanine + L-proline + 2 L-leucine + A = fusahexin + AH2 + 6 H2O. It functions in the pathway secondary metabolite biosynthesis. Its function is as follows. Nonribosomal peptide synthetase; part of the gene cluster that mediates the biosynthesis of the fusahexin, a cyclic hydrophobic hexapeptide with the amino acid sequence cyclo-(D-Ala-L-Leu-D-allo-Thr-L-Pro-D-Leu-L-Leu) that plays an important role in cell surface hydrophobicity. Fusahexin might also play a role in virulence, sensitivity to osmotic stress and oxidative stress. NRPS4 is the only enzyme within the cluster and its 5 catalytic modules are sufficient to produce fusahexin. The modules 1 to 4 incorporate respectively D-alanine, L-leucine, D-allo-threonine, and L-proline, which is supported by the presence of epimerase domains in modules 1 and 3, which incorporate D-amino acids. The terminal module is responsible for incorporation of the two adjacent leucine units, where the epimerase domain is only used to convert the first unit to D-leucine. The terminal condensation domain (Ct) is involved in cyclization with D-alanine and thereby releasing of fusahexin. This Gibberella zeae (strain ATCC MYA-4620 / CBS 123657 / FGSC 9075 / NRRL 31084 / PH-1) (Wheat head blight fungus) protein is Nonribosomal peptide synthetase 4.